The chain runs to 275 residues: Tryptophan synthase alpha chain (275 aa).

Catalysis depends on proton acceptor residues Glu-49 and Asp-60.

This sequence belongs to the TrpA family. In terms of assembly, tetramer of two alpha and two beta chains.

The catalysed reaction is (1S,2R)-1-C-(indol-3-yl)glycerol 3-phosphate + L-serine = D-glyceraldehyde 3-phosphate + L-tryptophan + H2O. It participates in amino-acid biosynthesis; L-tryptophan biosynthesis; L-tryptophan from chorismate: step 5/5. The alpha subunit is responsible for the aldol cleavage of indoleglycerol phosphate to indole and glyceraldehyde 3-phosphate. The sequence is that of Tryptophan synthase alpha chain from Nitrosomonas europaea (strain ATCC 19718 / CIP 103999 / KCTC 2705 / NBRC 14298).